We begin with the raw amino-acid sequence, 93 residues long: Putative membrane protein insertion efficiency factor (93 aa).

Belongs to the UPF0161 family.

It localises to the cell inner membrane. In terms of biological role, could be involved in insertion of integral membrane proteins into the membrane. The sequence is that of Putative membrane protein insertion efficiency factor from Cupriavidus taiwanensis (strain DSM 17343 / BCRC 17206 / CCUG 44338 / CIP 107171 / LMG 19424 / R1) (Ralstonia taiwanensis (strain LMG 19424)).